The chain runs to 323 residues: Acetyl-coenzyme A carboxylase carboxyl transferase subunit alpha (323 aa).

In terms of domain architecture, CoA carboxyltransferase C-terminal spans 39 to 293 (RLSKKSQQLT…RRALGDSLRQ (255 aa)).

The protein belongs to the AccA family. In terms of assembly, acetyl-CoA carboxylase is a heterohexamer composed of biotin carboxyl carrier protein (AccB), biotin carboxylase (AccC) and two subunits each of ACCase subunit alpha (AccA) and ACCase subunit beta (AccD).

It localises to the cytoplasm. The enzyme catalyses N(6)-carboxybiotinyl-L-lysyl-[protein] + acetyl-CoA = N(6)-biotinyl-L-lysyl-[protein] + malonyl-CoA. Its pathway is lipid metabolism; malonyl-CoA biosynthesis; malonyl-CoA from acetyl-CoA: step 1/1. Functionally, component of the acetyl coenzyme A carboxylase (ACC) complex. First, biotin carboxylase catalyzes the carboxylation of biotin on its carrier protein (BCCP) and then the CO(2) group is transferred by the carboxyltransferase to acetyl-CoA to form malonyl-CoA. In Burkholderia pseudomallei (strain 1106a), this protein is Acetyl-coenzyme A carboxylase carboxyl transferase subunit alpha.